Here is a 69-residue protein sequence, read N- to C-terminus: U2-agatoxin-Ao1e (69 aa).

Positions 1-20 (MRAIISVLLISAMVFSIIEA) are cleaved as a signal peptide. A propeptide spanning residues 21 to 34 (VPLEEGLQLFEAER) is cleaved from the precursor. 3 cysteine pairs are disulfide-bonded: Cys-37–Cys-53, Cys-44–Cys-58, and Cys-52–Cys-68.

The protein belongs to the neurotoxin 01 (U2-agtx) family. As to expression, expressed by the venom gland.

The protein localises to the secreted. Functionally, insect active toxin causing rapid but reversible paralysis in crickets. No activity shown in mammals. Does not show effect on mammalian voltage-gated calcium channels. This Agelena orientalis (Funnel-web spider) protein is U2-agatoxin-Ao1e.